The chain runs to 857 residues: Bifunctional levopimaradiene synthase, chloroplastic (857 aa).

Residues 1–33 constitute a chloroplast transit peptide; the sequence is MALPSSSLSSQIHTGATTQCIPHFHGSLNAGTS. Lysine 257 contacts substrate. Mg(2+)-binding residues include aspartate 390 and aspartate 392. Positions 390-393 match the DXDD motif motif; that stretch reads DIDD. Lysine 477 is a binding site for substrate. Residues aspartate 609, aspartate 613, asparagine 753, threonine 757, and glutamate 761 each coordinate Mg(2+). The short motif at 609–613 is the DDXXD motif element; sequence DDLYD.

This sequence belongs to the terpene synthase family. Tpsd subfamily. Mg(2+) is required as a cofactor.

Its subcellular location is the plastid. The protein localises to the chloroplast. It carries out the reaction (2E,6E,10E)-geranylgeranyl diphosphate = (+)-copalyl diphosphate. The catalysed reaction is (+)-copalyl diphosphate = abieta-7,13-diene + diphosphate. The enzyme catalyses (+)-copalyl diphosphate = abieta-8(14),12-diene + diphosphate. It catalyses the reaction (+)-copalyl diphosphate = neoabietadiene + diphosphate. Its pathway is terpene metabolism; oleoresin biosynthesis. Functionally, involved in defensive oleoresin formation in conifers in response to insect attack or other injury. Involved in diterpene (C20) olefins biosynthesis. Bifunctional enzyme that catalyzes two sequential cyclizations of geranylgeranyl diphosphate (GGPP) to levopimaradiene. Levopimaradiene is the major products of the enzyme with abietadiene and neoabietadiene. No activity with farnesyl diphosphate (FPP) as substrate. This is Bifunctional levopimaradiene synthase, chloroplastic from Pinus contorta (Shore pine).